The sequence spans 436 residues: Xylose isomerase (436 aa).

Catalysis depends on residues H100 and D103. E231, E267, H270, D295, D306, D308, and D338 together coordinate Mg(2+).

This sequence belongs to the xylose isomerase family. As to quaternary structure, homotetramer. It depends on Mg(2+) as a cofactor.

It is found in the cytoplasm. It catalyses the reaction alpha-D-xylose = alpha-D-xylulofuranose. This chain is Xylose isomerase, found in Ruegeria sp. (strain TM1040) (Silicibacter sp.).